The chain runs to 754 residues: MLDTVEHAATTPDQPQPYGELGLKDDEYRRIRQILGRRPTDTELAMYSVMWSEHCSYKSSKVHLRYFGETTSDEMRAAMLAGIGENAGVVDIGDGWAVTFKVESHNHPSYVEPYQGAATGVGGIVRDIMAMGARPVAVMDQLRFGAADAPDTRRVLDGVVRGIGGYGNSLGLPNIGGETVFDPCYAGNPLVNALCVGVLRQEDLHLAFASGAGNKIILFGARTGLDGIGGVSVLASDTFDAEGSRKKLPSVQVGDPFMEKVLIECCLELYAGGLVIGIQDLGGAGLSCATSELASAGDGGMTIQLDSVPLRAKEMTPAEVLCSESQERMCAVVSPKNVDAFLAVCRKWEVLATVIGEVTDGDRLQITWHGETVVDVPPRTVAHEGPVYQRPVARPDTQDALNADRSAKLSRPVTGDELRATLLALLGSPHLCSRAFITEQYDRYVRGNTVLAEHADGGMLRIDESTGRGIAVSTDASGRYTLLDPYAGAQLALAEAYRNVAVTGATPVAVTNCLNFGSPEDPGVMWQFTQAVRGLADGCADLGIPVTGGNVSFYNQTGSAAILPTPVVGVLGVIDDVRRRIPTGLGAEPGETLMLLGDTRDEFDGSVWAQVTADHLGGLPPVVDLAREKLLAAVLSSASRDGLVSAAHDLSEGGLAQAIVESALAGETGCRIVLPEGADPFVLLFSESAGRVLVAVPRTEESRFRGMCEARGLPAVRIGVVDQGSDAVEVQGLFAVSLAELRATSEAVLPRYFG.

Residues 1 to 21 (MLDTVEHAATTPDQPQPYGEL) form a disordered region. Residue histidine 54 is part of the active site. Tyrosine 57 and lysine 101 together coordinate ATP. Position 103 (glutamate 103) interacts with Mg(2+). Residues 104–107 (SHNH) and arginine 126 contribute to the substrate site. The active-site Proton acceptor is the histidine 105. Aspartate 127 is a binding site for Mg(2+). Residue glutamine 252 coordinates substrate. Aspartate 280 contributes to the Mg(2+) binding site. 324-326 (ESQ) is a binding site for substrate. The ATP site is built by asparagine 512 and glycine 549. Asparagine 550 serves as a coordination point for Mg(2+). Serine 552 provides a ligand contact to substrate.

Belongs to the FGAMS family. Monomer. Part of the FGAM synthase complex composed of 1 PurL, 1 PurQ and 2 PurS subunits.

Its subcellular location is the cytoplasm. The catalysed reaction is N(2)-formyl-N(1)-(5-phospho-beta-D-ribosyl)glycinamide + L-glutamine + ATP + H2O = 2-formamido-N(1)-(5-O-phospho-beta-D-ribosyl)acetamidine + L-glutamate + ADP + phosphate + H(+). It participates in purine metabolism; IMP biosynthesis via de novo pathway; 5-amino-1-(5-phospho-D-ribosyl)imidazole from N(2)-formyl-N(1)-(5-phospho-D-ribosyl)glycinamide: step 1/2. In terms of biological role, part of the phosphoribosylformylglycinamidine synthase complex involved in the purines biosynthetic pathway. Catalyzes the ATP-dependent conversion of formylglycinamide ribonucleotide (FGAR) and glutamine to yield formylglycinamidine ribonucleotide (FGAM) and glutamate. The FGAM synthase complex is composed of three subunits. PurQ produces an ammonia molecule by converting glutamine to glutamate. PurL transfers the ammonia molecule to FGAR to form FGAM in an ATP-dependent manner. PurS interacts with PurQ and PurL and is thought to assist in the transfer of the ammonia molecule from PurQ to PurL. The chain is Phosphoribosylformylglycinamidine synthase subunit PurL from Mycobacterium bovis (strain ATCC BAA-935 / AF2122/97).